A 100-amino-acid polypeptide reads, in one-letter code: Urease subunit gamma (100 aa).

The protein belongs to the urease gamma subunit family. Heterotrimer of UreA (gamma), UreB (beta) and UreC (alpha) subunits. Three heterotrimers associate to form the active enzyme.

Its subcellular location is the cytoplasm. The catalysed reaction is urea + 2 H2O + H(+) = hydrogencarbonate + 2 NH4(+). The protein operates within nitrogen metabolism; urea degradation; CO(2) and NH(3) from urea (urease route): step 1/1. This is Urease subunit gamma from Aliivibrio fischeri (strain ATCC 700601 / ES114) (Vibrio fischeri).